The primary structure comprises 215 residues: MSYKLELLRRALEHNVLKFGTFTLKSGRKSPYFFNSGNFTHGADLCALAEAYAETIIAMNVDFDVIFGPAYKGISLAAITAVKLYEKTGKSYGFAYNRKEAKSHGEGGNLVGAEMEGKKVLLLDDVITAGTAIREAISFLEPKHVKLAGIVLLLDRQERLDPEVNESTIGRLKKELNLPVSSILTLDDIVDFTKSDLTAAESKAMDAYRQQYQAK.

Lys-25 serves as a coordination point for 5-phospho-alpha-D-ribose 1-diphosphate. Phe-33–Phe-34 contacts orotate. Residues Tyr-71–Lys-72, Arg-98, Lys-99, Lys-102, His-104, and Asp-124–Ala-132 each bind 5-phospho-alpha-D-ribose 1-diphosphate. 2 residues coordinate orotate: Thr-128 and Arg-156.

Belongs to the purine/pyrimidine phosphoribosyltransferase family. PyrE subfamily. In terms of assembly, homodimer.

The enzyme catalyses orotidine 5'-phosphate + diphosphate = orotate + 5-phospho-alpha-D-ribose 1-diphosphate. The protein operates within pyrimidine metabolism; UMP biosynthesis via de novo pathway; UMP from orotate: step 1/2. Functionally, catalyzes the transfer of a ribosyl phosphate group from 5-phosphoribose 1-diphosphate to orotate, leading to the formation of orotidine monophosphate (OMP). The protein is Orotate phosphoribosyltransferase (ura5) of Schizosaccharomyces pombe (strain 972 / ATCC 24843) (Fission yeast).